The primary structure comprises 162 residues: Transcription elongation factor GreA (162 aa).

Residues 45 to 74 (ENAEYEAAREKQAFIEGRIKELEDMTARAE) adopt a coiled-coil conformation.

Belongs to the GreA/GreB family.

Necessary for efficient RNA polymerase transcription elongation past template-encoded arresting sites. The arresting sites in DNA have the property of trapping a certain fraction of elongating RNA polymerases that pass through, resulting in locked ternary complexes. Cleavage of the nascent transcript by cleavage factors such as GreA or GreB allows the resumption of elongation from the new 3'terminus. GreA releases sequences of 2 to 3 nucleotides. The chain is Transcription elongation factor GreA from Rickettsia prowazekii (strain Madrid E).